The following is a 471-amino-acid chain: Tripartite motif-containing protein 60 (471 aa).

Residues 16–57 form an RING-type zinc finger; that stretch reads CPICLEYLKDPVTINCGHNFCRSCLSVSWKDLDDTFPCPVCR. A B box-type zinc finger spans residues 92–133; the sequence is KENAMCEKHNQFLTLFCVKDLEILCTQCSFSTKHQKHYICPI. Positions 97, 100, 119, and 125 each coordinate Zn(2+). The stretch at 171-223 forms a coiled coil; sequence ELKKKVEYKREEINSEFEQIRLFLQNEQEMILRQIQDEEMNILAKLNENLVEL. The B30.2/SPRY domain maps to 277–470; that stretch reads FSLPPQYSGL…LKICSVSDSE (194 aa).

This sequence belongs to the TRIM/RBCC family.

E3 SUMO-protein ligase that mediates SUMOylation of TAB2 leading to inhibition of NF-kappa-B and MAPK pathways by suppressing the TRAF6/TAB2/TAK1 complex. In Homo sapiens (Human), this protein is Tripartite motif-containing protein 60 (TRIM60).